The chain runs to 499 residues: Replication factor C large subunit (499 aa).

ATP is bound at residue 50–57; sequence GPPGVGKT. Residues 428–499 are disordered; that stretch reads EAERRVEAAE…QATLFDFLKK (72 aa). Residues 436-472 are compositionally biased toward acidic residues; sequence AEEEETMEAGEPEEELEEVEEEELTEEELEEAEEEIE. Over residues 473 to 484 the composition is skewed to basic and acidic residues; that stretch reads TVGKKEKPEKEK.

The protein belongs to the activator 1 small subunits family. RfcL subfamily. In terms of assembly, heteromultimer composed of small subunits (RfcS) and large subunits (RfcL).

Its function is as follows. Part of the RFC clamp loader complex which loads the PCNA sliding clamp onto DNA. The polypeptide is Replication factor C large subunit (Thermococcus kodakarensis (strain ATCC BAA-918 / JCM 12380 / KOD1) (Pyrococcus kodakaraensis (strain KOD1))).